The sequence spans 241 residues: 3-deoxy-manno-octulosonate cytidylyltransferase (241 aa).

This sequence belongs to the KdsB family.

It localises to the cytoplasm. The catalysed reaction is 3-deoxy-alpha-D-manno-oct-2-ulosonate + CTP = CMP-3-deoxy-beta-D-manno-octulosonate + diphosphate. Its pathway is nucleotide-sugar biosynthesis; CMP-3-deoxy-D-manno-octulosonate biosynthesis; CMP-3-deoxy-D-manno-octulosonate from 3-deoxy-D-manno-octulosonate and CTP: step 1/1. It participates in bacterial outer membrane biogenesis; lipopolysaccharide biosynthesis. In terms of biological role, activates KDO (a required 8-carbon sugar) for incorporation into bacterial lipopolysaccharide in Gram-negative bacteria. This chain is 3-deoxy-manno-octulosonate cytidylyltransferase, found in Rickettsia typhi (strain ATCC VR-144 / Wilmington).